A 141-amino-acid chain; its full sequence is MKENDVVLKSVTKIVVFILLTFGFYVFFAGHNNPGGGFIGGLIFSSAFILMFLAFDVNEVLKSLPIDFKKLMIIGSLISVATASVPMFFGKPFLYQTEANVTFPLLGHVHVTTVTLFELGILLTVVGVIVTVMLSISGGRS.

The next 4 helical transmembrane spans lie at 10–30 (SVTK…FFAG), 35–55 (GGGF…FLAF), 70–90 (KLMI…MFFG), and 116–136 (LFEL…MLSI).

This sequence belongs to the CPA3 antiporters (TC 2.A.63) subunit B family. As to quaternary structure, may form a heterooligomeric complex that consists of seven subunits: mnhA2, mnhB2, mnhC2, mnhD2, mnhE2, mnhF2 and mnhG2.

The protein resides in the cell membrane. The chain is Putative antiporter subunit mnhB2 (mnhB2) from Staphylococcus epidermidis (strain ATCC 35984 / DSM 28319 / BCRC 17069 / CCUG 31568 / BM 3577 / RP62A).